The chain runs to 452 residues: Nebulette (452 aa).

The disordered stretch occupies residues 1–26; the sequence is MKVPVSGDVKEETEEENVEQEENQEA. Over residues 11–23 the composition is skewed to acidic residues; sequence EETEEENVEQEEN. Nebulin repeat units lie at residues 29–63, 64–98, 101–135, 138–172, 173–199, 206–240, 263–278, 279–313, 315–349, 352–386, 389–423, and 426–452; these read SLKP…KSKD, KCTF…ADLS, LYKD…AEKG, DYTH…GTHT, YTAE…EYKK, KEPS…NEMK, LASD…ENKG, LYHF…KNKG, SMLE…KEIK, SSLD…NEIK, GMEL…TEIK, and GMQV…VRMV.

As to quaternary structure, interacts (via nebulin repeats 1-5) with DESM (via rod region). Interacts (via SH3 domain) with XIRP2.

It is found in the cytoplasm. Its function is as follows. Binds to actin and plays an important role in the assembly of the Z-disk. May functionally link sarcomeric actin to the desmin intermediate filaments in the heart muscle sarcomeres. Isoform 2 might play a role in the assembly of focal adhesion. This Mus musculus (Mouse) protein is Nebulette (Nebl).